We begin with the raw amino-acid sequence, 95 residues long: Small ribosomal subunit protein bS6 (95 aa).

The protein belongs to the bacterial ribosomal protein bS6 family.

In terms of biological role, binds together with bS18 to 16S ribosomal RNA. The polypeptide is Small ribosomal subunit protein bS6 (Corynebacterium glutamicum (strain ATCC 13032 / DSM 20300 / JCM 1318 / BCRC 11384 / CCUG 27702 / LMG 3730 / NBRC 12168 / NCIMB 10025 / NRRL B-2784 / 534)).